The primary structure comprises 855 residues: DNA mismatch repair protein MutS (855 aa).

An ATP-binding site is contributed by 613–620 (GPNMGGKS). The disordered stretch occupies residues 796-816 (TTSLPHEMPSQQSGKPASPMQ).

Belongs to the DNA mismatch repair MutS family.

Its function is as follows. This protein is involved in the repair of mismatches in DNA. It is possible that it carries out the mismatch recognition step. This protein has a weak ATPase activity. This Pseudomonas aeruginosa (strain LESB58) protein is DNA mismatch repair protein MutS.